Consider the following 449-residue polypeptide: Hyaluronidase-2 (449 aa).

A signal peptide spans 1-23; the sequence is MYHLWIKCLAAWIFLKRCNGVHA. 2 cysteine pairs are disulfide-bonded: Cys-47–Cys-340 and Cys-211–Cys-227. Residues Asn-67, Asn-103, and Asn-111 are each glycosylated (N-linked (GlcNAc...) asparagine). Catalysis depends on Glu-135, which acts as the Proton donor. Asn-153 carries an N-linked (GlcNAc...) asparagine glycan. Asn-357 carries an N-linked (GlcNAc...) asparagine glycan. Cystine bridges form between Cys-365–Cys-376, Cys-370–Cys-427, and Cys-429–Cys-438. The N-linked (GlcNAc...) asparagine glycan is linked to Asn-401. Positions 427 to 438 constitute an EGF-like domain; the sequence is CQCYQGWKGLYC.

The protein belongs to the glycosyl hydrolase 56 family. As to quaternary structure, monomer. Expressed by the venom gland.

The protein localises to the secreted. It catalyses the reaction Random hydrolysis of (1-&gt;4)-linkages between N-acetyl-beta-D-glucosamine and D-glucuronate residues in hyaluronate.. In terms of biological role, snake venom endo-hyaluronidase that degrades hyaluronan to smaller oligosaccharide fragments. In venom, it is not toxic by itself, but increases the diffusion of other venom proteins by degrading the extracellular matrix. In addition, it displays antiedematogenic activity. The polypeptide is Hyaluronidase-2 (Bitis arietans (African puff adder)).